Here is a 305-residue protein sequence, read N- to C-terminus: MACILKRKPALAVSFIALCILLLAMRLANDVTFPLLLNCFGQPKTKWIPLSYTLRQPLQTHYGYINVRTQEPLQLNCNHCAVVSNSGQMVGQKVGEEIDRASCIWRMNNAPTKGFEEDVGYMTMVRVVSHTSVPLLLKNPDYFFKEASTTIYVIWGPFRNMRKDGNGIVYNMLKKTVDAYPDAQIYVTTEQRMTYCDGVFKDETGKDRVQSGSYLSTGWFTFILAMDACYSIHVYGMINETYCTTEGYRKVPYHYYEQGKDECNEYLLHEHAPYGGHRFITEKKVFAKWAKKHRIVFTHPNWTVS.

The Cytoplasmic segment spans residues 1–8; it reads MACILKRK. The helical; Signal-anchor for type II membrane protein transmembrane segment at 9–29 threads the bilayer; it reads PALAVSFIALCILLLAMRLAN. The Lumenal portion of the chain corresponds to 30–305; the sequence is DVTFPLLLNC…VFTHPNWTVS (276 aa). An intrachain disulfide couples Cys-80 to Cys-229. N-linked (GlcNAc...) asparagine glycans are attached at residues Asn-239 and Asn-301.

Belongs to the glycosyltransferase 29 family. As to expression, in adults it is highly expressed in spleen, followed by kidney and lesser in lung. Not found in liver and skeletal muscle. In newborns it is abundantly expressed in brain and kidney.

It localises to the golgi apparatus membrane. The catalysed reaction is an alpha-Neu5Ac-(2-&gt;3)-beta-D-Gal-(1-&gt;3)-D-GlcNAc derivative + CMP-N-acetyl-beta-neuraminate = an alpha-Neu5Ac-(2-&gt;3)-beta-D-Gal-(1-&gt;3)-[alpha-Neu5Ac-(2-&gt;6)]-D-GlcNAc derivative + CMP + H(+). The enzyme catalyses a ganglioside GM1b + CMP-N-acetyl-beta-neuraminate = a ganglioside GD1alpha + CMP + H(+). It catalyses the reaction a ganglioside GM1b (d18:1(4E)) + CMP-N-acetyl-beta-neuraminate = a ganglioside GD1alpha (d18:1(4E)) + CMP + H(+). It carries out the reaction a globoside MSGG + CMP-N-acetyl-beta-neuraminate = a globoside DSGG + CMP + H(+). The catalysed reaction is 3-O-[alpha-Neu5Ac-(2-&gt;3)-beta-D-Gal-(1-&gt;3)-alpha-D-GalNAc]-L-Ser-[protein] + CMP-N-acetyl-beta-neuraminate = a 3-O-{alpha-Neu5Ac-(2-&gt;3)-beta-D-Gal-(1-&gt;3)-[alpha-Neu5Ac-(2-&gt;6)]-alpha-D-GalNAc}-L-seryl-[protein] + CMP + H(+). The enzyme catalyses 3-O-[alpha-Neu5Ac-(2-&gt;3)-beta-D-Gal-(1-&gt;3)-alpha-D-GalNAc]-L-Thr-[protein] + CMP-N-acetyl-beta-neuraminate = a 3-O-{alpha-Neu5Ac-(2-&gt;3)-beta-D-Gal-(1-&gt;3)-[alpha-Neu5Ac-(2-&gt;6)]-alpha-D-GalNAc}-L-threonyl-[protein] + CMP + H(+). The protein operates within protein modification; protein glycosylation. Its pathway is glycolipid biosynthesis. In terms of biological role, transfers the sialyl group (N-acetyl-alpha-neuraminyl or NeuAc) from CMP-NeuAc to the GalNAc residue on the NeuAc-alpha-2,3-Gal-beta-1,3-GalNAc sequence of glycoproteins and glycolipids forming an alpha-2,6-linkage. Produces branched type disialyl structures by transfer of a sialyl group onto a GalNAc residue inside the backbone core chains. ST6GalNAcIII prefers glycolipids to glycoproteins, predominantly catalyzing the biosynthesis of ganglioside GD1alpha from GM1b. GD1alpha is a critical molecule in the communication and interaction between neuronal cells and their supportive cells, particularly in brain tissues, and functions as an adhesion molecule in the process of metastasis. Sialylation of glycoproteins or glycosphingolipids is very important in tumor development, neuronal development, nerve repair, immunological processes and regulation of hormone sensitivity. This Rattus norvegicus (Rat) protein is Alpha-N-acetylgalactosaminide alpha-2,6-sialyltransferase 3 (St6galnac3).